A 126-amino-acid chain; its full sequence is Protein ApaG (126 aa).

In terms of domain architecture, ApaG spans 2–126; that stretch reads SDPRYQVDVS…FRLAVPGALH (125 aa).

The sequence is that of Protein ApaG from Pseudomonas fluorescens (strain Pf0-1).